The chain runs to 689 residues: Ataxin-1-like (689 aa).

The segment covering 1–19 (MKPVHERSQECLPPKKRDL) has biased composition (basic and acidic residues). Disordered stretches follow at residues 1–46 (MKPV…SEWS), 185–223 (ATPP…LDLA), and 242–297 (LHET…GEGQ). The tract at residues 20 to 197 (PVTSEDMGRT…PPQAPSPAHS (178 aa)) is interaction with NCOR2 and ATXN1. Residues 20–197 (PVTSEDMGRT…PPQAPSPAHS (178 aa)) form a self-association region. Composition is skewed to polar residues over residues 28–43 (RTTS…SDAS) and 200–219 (KAPS…STQP). The span at 257–268 (QESQSALEAAAA) shows a compositional bias: low complexity. Basic and acidic residues predominate over residues 273–285 (RPRERNLVRRESE). Ser284 carries the post-translational modification Phosphoserine. At Thr330 the chain carries Phosphothreonine. Positions 357–405 (KEEPSPLNLSHHTPDHQGEGRGSARNPAELAEKSQARGFYPQSHQEPVK) are disordered. Position 361 is a phosphoserine (Ser361). Residues 457–588 (PPPITSSHLP…SISLQSLNSN (132 aa)) enclose the AXH domain. At Ser615 the chain carries Phosphoserine. Residues 617-647 (ELCDSEGKSQPAGEGSRVVEPSQPESGAQAC) form a disordered region.

Belongs to the ATXN1 family. As to quaternary structure, homodimer. Interacts with CIC. Interacts (via AXH domain) with NCOR2. Interacts with ATXN1. Directly interacts with RBPJ; this interaction is disrupted in the presence of Notch intracellular domain. Competes with ATXN1 for RBPJ-binding. Found in a complex with CIC and ATXN1. As to expression, expressed in cerebellum and cerebral cortex.

It localises to the nucleus. Its subcellular location is the cell projection. The protein resides in the dendrite. In terms of biological role, chromatin-binding factor that repress Notch signaling in the absence of Notch intracellular domain by acting as a CBF1 corepressor. Binds to the HEY promoter and might assist, along with NCOR2, RBPJ-mediated repression. Can suppress ATXN1 cytotoxicity in spinocerebellar ataxia type 1 (SCA1). In concert with CIC and ATXN1, involved in brain development. In Homo sapiens (Human), this protein is Ataxin-1-like (ATXN1L).